We begin with the raw amino-acid sequence, 186 residues long: Elongation factor P (186 aa).

The protein belongs to the elongation factor P family.

Its subcellular location is the cytoplasm. The protein operates within protein biosynthesis; polypeptide chain elongation. Its function is as follows. Involved in peptide bond synthesis. Stimulates efficient translation and peptide-bond synthesis on native or reconstituted 70S ribosomes in vitro. Probably functions indirectly by altering the affinity of the ribosome for aminoacyl-tRNA, thus increasing their reactivity as acceptors for peptidyl transferase. The chain is Elongation factor P from Neisseria gonorrhoeae (strain NCCP11945).